A 47-amino-acid polypeptide reads, in one-letter code: Variabilin (47 aa).

Residues Arg-32 to Asp-34 carry the Cell attachment site motif.

Post-translationally, contains 2 disulfide bonds. In terms of tissue distribution, expressed in salivary glands.

It is found in the secreted. In terms of biological role, potently inhibits platelet aggregation induced by ADP (IC(50)=157 nM, complete inhibition at 514 nM). Also inhibits platelet aggregation induced by collagen and by the thrombin receptor peptide SFLLRNP. Is a potent antagonist of the fibrinogen receptor glycoprotein IIb-IIIa (ITGA2B/ITGB3) and the vitronectin receptor alpha-v/beta-3 (ITGAV/ITGB3). In Dermacentor variabilis (American dog tick), this protein is Variabilin.